The chain runs to 400 residues: Opsin-3 (400 aa).

Residues 1–38 are Extracellular-facing; sequence MYSGNRSGDQGYWEDGAGAEGAAPAGTRSPAPLFSPTA. Residue Asn-5 is glycosylated (N-linked (GlcNAc...) asparagine). Residues 39 to 63 traverse the membrane as a helical segment; it reads YERLALLLGCLALLGVGGNLLVLLL. At 64–75 the chain is on the cytoplasmic side; the sequence is YSKFPRLRTPTH. A helical membrane pass occupies residues 76 to 100; it reads LFLVNLSLGDLLVSLFGVTFTFASC. Topologically, residues 101-115 are extracellular; the sequence is LRNGWVWDAVGCAWD. A disulfide bridge links Cys-112 with Cys-186. The chain crosses the membrane as a helical span at residues 116–135; that stretch reads GFSGSLFGFVSITTLTVLAY. At 136 to 151 the chain is on the cytoplasmic side; the sequence is ERYIRVVHARVINFSW. Residues 152–175 traverse the membrane as a helical segment; that stretch reads AWRAITYIWLYSLAWAGAPLLGWN. Residues 176–199 lie on the Extracellular side of the membrane; that stretch reads RYILDIHGLGCTVDWRSKDANDSS. Residue Asn-196 is glycosylated (N-linked (GlcNAc...) asparagine). The helical transmembrane segment at 200–227 threads the bilayer; it reads FVLFLFLGCLVVPVGIIAHCYGHILYSV. Over 228 to 253 the chain is Cytoplasmic; the sequence is RMLRCVEDLQTIQVIKMLRYEKKVAK. Residues 254–277 form a helical membrane-spanning segment; it reads MCFLMAFVFLTCWMPYIVTRFLVV. Over 278 to 285 the chain is Extracellular; that stretch reads NGYGHLVT. A helical transmembrane segment spans residues 286-310; sequence PTVSIVSYLFAKSSTVYNPVIYIFM. Lys-297 is modified (N6-(retinylidene)lysine). Over 311–400 the chain is Cytoplasmic; sequence NRKFRRSLLQ…KVDVIQVRPL (90 aa). A lipid anchor (S-palmitoyl cysteine) is attached at Cys-323.

Belongs to the G-protein coupled receptor 1 family. Opsin subfamily. As to quaternary structure, interacts with MC1R; the interaction results in a decrease in MC1R-mediated cAMP signaling and ultimately a decrease in melanin production in melanocytes. As to expression, expressed in the eye (at protein level). Expressed in tracheal airway smooth muscle. Expressed in brown adipocyte tissue; expression becomes more abundant during differentiation. Strongly expressed in brain. Highly expressed in the preoptic area and paraventricular nucleus of the hypothalamus. Shows highly patterned expression in other regions of the brain, being enriched in selected regions of the cerebral cortex, cerebellar Purkinje cells, a subset of striatal neurons, selected thalamic nuclei, and a subset of interneurons in the ventral horn of the spinal cord.

Its subcellular location is the cell membrane. The protein localises to the cytoplasm. In terms of biological role, G-protein coupled receptor which selectively activates G proteins via ultraviolet A (UVA) light-mediated activation in the skin. Binds both 11-cis retinal and all-trans retinal. Regulates melanogenesis in melanocytes via inhibition of alpha-MSH-induced MC1R-mediated cAMP signaling, modulation of calcium flux, regulation of CAMK2 phosphorylation, and subsequently phosphorylation of CREB, p38, ERK and MITF in response to blue light. Plays a role in melanocyte survival through regulation of intracellular calcium levels and subsequent BCL2/RAF1 signaling. Additionally regulates apoptosis via cytochrome c release and subsequent activation of the caspase cascade. Required for TYR and DCT blue light-induced complex formation in melanocytes. Involved in keratinocyte differentiation in response to blue-light. Required for the UVA-mediated induction of calcium and mitogen-activated protein kinase signaling resulting in the expression of MMP1, MMP2, MMP3, MMP9 and TIMP1 in dermal fibroblasts. Plays a role in light-mediated glucose uptake, mitochondrial respiration and fatty acid metabolism in brown adipocyte tissues. May be involved in photorelaxation of airway smooth muscle cells, via blue-light dependent GPCR signaling pathways. This is Opsin-3 (Opn3) from Mus musculus (Mouse).